We begin with the raw amino-acid sequence, 356 residues long: Dihydroorotate dehydrogenase (quinone) (356 aa).

FMN contacts are provided by residues 66 to 70 (AGFDK) and Thr-90. Lys-70 contributes to the substrate binding site. 115–119 (NRMGF) contributes to the substrate binding site. The FMN site is built by Asn-143 and Asn-176. Residue Asn-176 participates in substrate binding. Ser-179 functions as the Nucleophile in the catalytic mechanism. Asn-181 provides a ligand contact to substrate. Residues Lys-212 and Thr-240 each contribute to the FMN site. 241 to 242 (NT) contacts substrate. Residues Gly-266, Gly-295, and 316 to 317 (YT) each bind FMN.

This sequence belongs to the dihydroorotate dehydrogenase family. Type 2 subfamily. Monomer. FMN is required as a cofactor.

Its subcellular location is the cell membrane. The enzyme catalyses (S)-dihydroorotate + a quinone = orotate + a quinol. The protein operates within pyrimidine metabolism; UMP biosynthesis via de novo pathway; orotate from (S)-dihydroorotate (quinone route): step 1/1. Its function is as follows. Catalyzes the conversion of dihydroorotate to orotate with quinone as electron acceptor. This Rhodococcus erythropolis (strain PR4 / NBRC 100887) protein is Dihydroorotate dehydrogenase (quinone).